The chain runs to 338 residues: Biotin synthase (338 aa).

The Radical SAM core domain maps to 45-272 (DEVQMSTLLS…QSVVRLSAGR (228 aa)). 3 residues coordinate [4Fe-4S] cluster: Cys60, Cys64, and Cys67. Cys104, Cys135, Cys195, and Arg267 together coordinate [2Fe-2S] cluster.

Belongs to the radical SAM superfamily. Biotin synthase family. Homodimer. Requires [4Fe-4S] cluster as cofactor. It depends on [2Fe-2S] cluster as a cofactor.

It catalyses the reaction (4R,5S)-dethiobiotin + (sulfur carrier)-SH + 2 reduced [2Fe-2S]-[ferredoxin] + 2 S-adenosyl-L-methionine = (sulfur carrier)-H + biotin + 2 5'-deoxyadenosine + 2 L-methionine + 2 oxidized [2Fe-2S]-[ferredoxin]. It participates in cofactor biosynthesis; biotin biosynthesis; biotin from 7,8-diaminononanoate: step 2/2. Its function is as follows. Catalyzes the conversion of dethiobiotin (DTB) to biotin by the insertion of a sulfur atom into dethiobiotin via a radical-based mechanism. This chain is Biotin synthase, found in Parvibaculum lavamentivorans (strain DS-1 / DSM 13023 / NCIMB 13966).